The following is a 231-amino-acid chain: Large ribosomal subunit protein uL1 (231 aa).

The protein belongs to the universal ribosomal protein uL1 family. As to quaternary structure, part of the 50S ribosomal subunit.

Binds directly to 23S rRNA. The L1 stalk is quite mobile in the ribosome, and is involved in E site tRNA release. Functionally, protein L1 is also a translational repressor protein, it controls the translation of the L11 operon by binding to its mRNA. The protein is Large ribosomal subunit protein uL1 of Shouchella clausii (strain KSM-K16) (Alkalihalobacillus clausii).